A 444-amino-acid polypeptide reads, in one-letter code: Methylenetetrahydrofolate--tRNA-(uracil-5-)-methyltransferase TrmFO (444 aa).

Glycine 10–glycine 15 lines the FAD pocket.

Belongs to the MnmG family. TrmFO subfamily. FAD serves as cofactor.

It localises to the cytoplasm. It carries out the reaction uridine(54) in tRNA + (6R)-5,10-methylene-5,6,7,8-tetrahydrofolate + NADH + H(+) = 5-methyluridine(54) in tRNA + (6S)-5,6,7,8-tetrahydrofolate + NAD(+). It catalyses the reaction uridine(54) in tRNA + (6R)-5,10-methylene-5,6,7,8-tetrahydrofolate + NADPH + H(+) = 5-methyluridine(54) in tRNA + (6S)-5,6,7,8-tetrahydrofolate + NADP(+). Functionally, catalyzes the folate-dependent formation of 5-methyl-uridine at position 54 (M-5-U54) in all tRNAs. The sequence is that of Methylenetetrahydrofolate--tRNA-(uracil-5-)-methyltransferase TrmFO from Streptococcus gordonii (strain Challis / ATCC 35105 / BCRC 15272 / CH1 / DL1 / V288).